A 188-amino-acid polypeptide reads, in one-letter code: MNKTATCELLLFVSGEAGLTLTELSSLTEMSKQACQQQIDYLKEKYHSDRESALTIIETAGKYRMATKEDFSEILKNYAKTPLNQSLSKSALEVLSIIAYKQPLTRIEIDQLRGVNSSGVLSTLRAFDLVEKVGQVEAPGRPSLYATTEFFLDYIGINNLEELPEIDESRYVAEQQTLFNESEENENQ.

Belongs to the ScpB family. In terms of assembly, homodimer. Homodimerization may be required to stabilize the binding of ScpA to the Smc head domains. Component of a cohesin-like complex composed of ScpA, ScpB and the Smc homodimer, in which ScpA and ScpB bind to the head domain of Smc. The presence of the three proteins is required for the association of the complex with DNA.

Its subcellular location is the cytoplasm. Participates in chromosomal partition during cell division. May act via the formation of a condensin-like complex containing Smc and ScpA that pull DNA away from mid-cell into both cell halves. The polypeptide is Segregation and condensation protein B (Lactococcus lactis subsp. cremoris (strain MG1363)).